Reading from the N-terminus, the 886-residue chain is Protein translocase subunit SecA (886 aa).

ATP-binding positions include Gln85, 103–107 (GEGKT), and Asp492. Over residues 841–864 (RVVENRYAEEGPKQPARRENKVGR) the composition is skewed to basic and acidic residues. Residues 841–866 (RVVENRYAEEGPKQPARRENKVGRND) are disordered. The Zn(2+) site is built by Cys868, Cys870, Cys879, and Cys880.

The protein belongs to the SecA family. As to quaternary structure, monomer and homodimer. Part of the essential Sec protein translocation apparatus which comprises SecA, SecYEG and auxiliary proteins SecDF. Other proteins may also be involved. The cofactor is Zn(2+).

It localises to the cell membrane. The protein localises to the cytoplasm. It carries out the reaction ATP + H2O + cellular proteinSide 1 = ADP + phosphate + cellular proteinSide 2.. Its function is as follows. Part of the Sec protein translocase complex. Interacts with the SecYEG preprotein conducting channel. Has a central role in coupling the hydrolysis of ATP to the transfer of proteins into and across the cell membrane, serving as an ATP-driven molecular motor driving the stepwise translocation of polypeptide chains across the membrane. The chain is Protein translocase subunit SecA from Pelotomaculum thermopropionicum (strain DSM 13744 / JCM 10971 / SI).